Here is a 415-residue protein sequence, read N- to C-terminus: Lysosome-associated membrane glycoprotein 2 (415 aa).

Residues 1-25 (MCLSPVKGAKLILIFLFLGAVQSNA) form the signal peptide. Residues 26–188 (LIVNLTDSKG…SKNEQVCEED (163 aa)) form a first lumenal domain region. Topologically, residues 26 to 379 (LIVNLTDSKG…AQDCSADEDN (354 aa)) are lumenal. N-linked (GlcNAc...) asparagine glycans are attached at residues Asn-29, Asn-45, Asn-54, Asn-57, Asn-97, Asn-115, and Asn-175. An intrachain disulfide couples Cys-37 to Cys-75. The cysteines at positions 149 and 185 are disulfide-linked. The tract at residues 189-233 (QTPTTVAPIIHTTAPSTTTTLTPTSTPTPTPTPTPTVGNYSIRNG) is hinge. Residues 202–213 (APSTTTTLTPTS) are compositionally biased toward low complexity. Positions 202 to 227 (APSTTTTLTPTSTPTPTPTPTPTVGN) are disordered. Asn-227, Asn-234, Asn-247, Asn-265, Asn-280, Asn-312, Asn-317, Asn-322, and Asn-361 each carry an N-linked (GlcNAc...) asparagine glycan. The tract at residues 234–379 (NTTCLLATMG…AQDCSADEDN (146 aa)) is second lumenal domain. Cys-237 and Cys-270 are oxidised to a cystine. An intrachain disulfide couples Cys-336 to Cys-373. A helical transmembrane segment spans residues 380 to 404 (FLVPIAVGAALGGVLILVLLAYFIG). Residues 405–415 (LKRHHTGYEQF) lie on the Cytoplasmic side of the membrane. An important for binding and subsequent lysosomal degradation of target proteins region spans residues 406-409 (KRHH).

The protein belongs to the LAMP family. Monomer. Forms large homooligomers. Interacts (via its cytoplasmic region) with HSPA8; HSPA8 mediates recruitment of proteins with a KFERQ motif to the surface of the lysosome for chaperone-mediated autophagy. Interacts with HSP90 in the lysosome lumen; this enhances LAMP2 stability. Interacts with MLLT11. Interacts with ABCB9. Interacts with FURIN. Interacts with CT55; this interaction may be important for LAMP2 protein stability. Interacts with TMEM175; inhibiting the proton channel activity of TMEM175. Forms a ternary complex with RAB7A and RUFY4 (via RUN domain); the interaction with RAB7A is mediated by RUFY4 (via RUN and coiled coil domains). Extensively N-glycosylated. Contains a minor proportion of O-linked glycans. In terms of tissue distribution, detected in liver and kidney (at protein level). Detected in liver and kidney.

It is found in the lysosome membrane. It localises to the endosome membrane. Its subcellular location is the cytoplasmic vesicle. The protein localises to the autophagosome membrane. The protein resides in the cell membrane. Lysosomal membrane glycoprotein which plays an important role in lysosome biogenesis, lysosomal pH regulation and autophagy. Acts as an important regulator of lysosomal lumen pH regulation by acting as a direct inhibitor of the proton channel TMEM175, facilitating lysosomal acidification for optimal hydrolase activity. Plays an important role in chaperone-mediated autophagy, a process that mediates lysosomal degradation of proteins in response to various stresses and as part of the normal turnover of proteins with a long biological half-live. Functions by binding target proteins, such as GAPDH, NLRP3 and MLLT11, and targeting them for lysosomal degradation. In the chaperone-mediated autophagy, acts downstream of chaperones, such as HSPA8/HSC70, which recognize and bind substrate proteins and mediate their recruitment to lysosomes, where target proteins bind LAMP2. Plays a role in lysosomal protein degradation in response to starvation. Required for the fusion of autophagosomes with lysosomes during autophagy. Cells that lack LAMP2 express normal levels of VAMP8, but fail to accumulate STX17 on autophagosomes, which is the most likely explanation for the lack of fusion between autophagosomes and lysosomes. Required for normal degradation of the contents of autophagosomes. Required for efficient MHC class II-mediated presentation of exogenous antigens via its function in lysosomal protein degradation; antigenic peptides generated by proteases in the endosomal/lysosomal compartment are captured by nascent MHC II subunits. Is not required for efficient MHC class II-mediated presentation of endogenous antigens. The polypeptide is Lysosome-associated membrane glycoprotein 2 (Lamp2) (Mus musculus (Mouse)).